We begin with the raw amino-acid sequence, 129 residues long: NADPH-dependent 7-cyano-7-deazaguanine reductase (129 aa).

Cys-43 acts as the Thioimide intermediate in catalysis. Asp-50 (proton donor) is an active-site residue. Substrate is bound by residues 65–67 (VEL) and 84–85 (HE).

The protein belongs to the GTP cyclohydrolase I family. QueF type 1 subfamily.

The protein resides in the cytoplasm. It catalyses the reaction 7-aminomethyl-7-carbaguanine + 2 NADP(+) = 7-cyano-7-deazaguanine + 2 NADPH + 3 H(+). It functions in the pathway tRNA modification; tRNA-queuosine biosynthesis. In terms of biological role, catalyzes the NADPH-dependent reduction of 7-cyano-7-deazaguanine (preQ0) to 7-aminomethyl-7-deazaguanine (preQ1). In Aquifex aeolicus (strain VF5), this protein is NADPH-dependent 7-cyano-7-deazaguanine reductase.